The following is a 230-amino-acid chain: uncharacterized protein (230 aa).

Residues 118–195 are disordered; the sequence is LLDEILPKEP…SKREMERLER (78 aa). Residues 136-146 show a composition bias toward basic residues; sequence QKKKEKRAALK. 2 stretches are compositionally biased toward basic and acidic residues: residues 160 to 170 and 179 to 195; these read ETDLYGDRDSF and QRSE…RLER.

This is an uncharacterized protein from Schizosaccharomyces pombe (strain 972 / ATCC 24843) (Fission yeast).